Here is a 164-residue protein sequence, read N- to C-terminus: ATP synthase subunit b (164 aa).

Residues 10–32 (SAAMLMLFVLMVYFLNKFLYTPF) form a helical membrane-spanning segment.

The protein belongs to the ATPase B chain family. In terms of assembly, F-type ATPases have 2 components, F(1) - the catalytic core - and F(0) - the membrane proton channel. F(1) has five subunits: alpha(3), beta(3), gamma(1), delta(1), epsilon(1). F(0) has three main subunits: a(1), b(2) and c(10-14). The alpha and beta chains form an alternating ring which encloses part of the gamma chain. F(1) is attached to F(0) by a central stalk formed by the gamma and epsilon chains, while a peripheral stalk is formed by the delta and b chains.

The protein resides in the cell inner membrane. Functionally, f(1)F(0) ATP synthase produces ATP from ADP in the presence of a proton or sodium gradient. F-type ATPases consist of two structural domains, F(1) containing the extramembraneous catalytic core and F(0) containing the membrane proton channel, linked together by a central stalk and a peripheral stalk. During catalysis, ATP synthesis in the catalytic domain of F(1) is coupled via a rotary mechanism of the central stalk subunits to proton translocation. Component of the F(0) channel, it forms part of the peripheral stalk, linking F(1) to F(0). The chain is ATP synthase subunit b from Thermotoga maritima (strain ATCC 43589 / DSM 3109 / JCM 10099 / NBRC 100826 / MSB8).